A 339-amino-acid chain; its full sequence is tRNA-specific 2-thiouridylase MnmA (339 aa).

ATP-binding positions include 8–15 and methionine 34; that span reads AMSGGVDS. The Nucleophile role is filled by cysteine 94. A disulfide bridge connects residues cysteine 94 and cysteine 188. Residue glycine 118 coordinates ATP. The interaction with tRNA stretch occupies residues 136 to 138; the sequence is KDQ. The Cysteine persulfide intermediate role is filled by cysteine 188. Positions 290-291 are interaction with tRNA; the sequence is RY.

This sequence belongs to the MnmA/TRMU family.

It localises to the cytoplasm. It carries out the reaction S-sulfanyl-L-cysteinyl-[protein] + uridine(34) in tRNA + AH2 + ATP = 2-thiouridine(34) in tRNA + L-cysteinyl-[protein] + A + AMP + diphosphate + H(+). Its function is as follows. Catalyzes the 2-thiolation of uridine at the wobble position (U34) of tRNA, leading to the formation of s(2)U34. The sequence is that of tRNA-specific 2-thiouridylase MnmA from Nitratiruptor sp. (strain SB155-2).